Here is a 176-residue protein sequence, read N- to C-terminus: RNA pyrophosphohydrolase (176 aa).

The region spanning 8–159 (PYRTCVGMML…KRPVYERVVK (152 aa)) is the Nudix hydrolase domain. The short motif at 47 to 68 (GGVDPGEDTWAAAKRELYEETS) is the Nudix box element.

Belongs to the Nudix hydrolase family. RppH subfamily. The cofactor is a divalent metal cation.

Functionally, accelerates the degradation of transcripts by removing pyrophosphate from the 5'-end of triphosphorylated RNA, leading to a more labile monophosphorylated state that can stimulate subsequent ribonuclease cleavage. This Rhodopseudomonas palustris (strain BisA53) protein is RNA pyrophosphohydrolase.